We begin with the raw amino-acid sequence, 178 residues long: uncharacterized protein (178 aa).

This is an uncharacterized protein from Acanthamoeba polyphaga mimivirus (APMV).